Consider the following 309-residue polypeptide: Acetyl-coenzyme A carboxylase carboxyl transferase subunit beta (309 aa).

The 270-residue stretch at 29–298 folds into the CoA carboxyltransferase N-terminal domain; sequence NSDWTSCCKG…AINSSENETS (270 aa). 4 residues coordinate Zn(2+): cysteine 35, cysteine 36, cysteine 52, and cysteine 55.

This sequence belongs to the AccD/PCCB family. As to quaternary structure, acetyl-CoA carboxylase is a heterohexamer composed of biotin carboxyl carrier protein (AccB), biotin carboxylase (AccC) and two subunits each of ACCase subunit alpha (AccA) and ACCase subunit beta (AccD). It depends on Zn(2+) as a cofactor.

Its subcellular location is the cytoplasm. It carries out the reaction N(6)-carboxybiotinyl-L-lysyl-[protein] + acetyl-CoA = N(6)-biotinyl-L-lysyl-[protein] + malonyl-CoA. Its pathway is lipid metabolism; malonyl-CoA biosynthesis; malonyl-CoA from acetyl-CoA: step 1/1. Its function is as follows. Component of the acetyl coenzyme A carboxylase (ACC) complex. Biotin carboxylase (BC) catalyzes the carboxylation of biotin on its carrier protein (BCCP) and then the CO(2) group is transferred by the transcarboxylase to acetyl-CoA to form malonyl-CoA. This is Acetyl-coenzyme A carboxylase carboxyl transferase subunit beta from Pelagibacter ubique (strain HTCC1062).